The following is a 263-amino-acid chain: tRNA1(Val) (adenine(37)-N6)-methyltransferase (263 aa).

Belongs to the methyltransferase superfamily. tRNA (adenine-N(6)-)-methyltransferase family.

It is found in the cytoplasm. It carries out the reaction adenosine(37) in tRNA1(Val) + S-adenosyl-L-methionine = N(6)-methyladenosine(37) in tRNA1(Val) + S-adenosyl-L-homocysteine + H(+). Functionally, specifically methylates the adenine in position 37 of tRNA(1)(Val) (anticodon cmo5UAC). This is tRNA1(Val) (adenine(37)-N6)-methyltransferase from Pseudoalteromonas atlantica (strain T6c / ATCC BAA-1087).